Reading from the N-terminus, the 570-residue chain is Urease subunit alpha (570 aa).

A Urease domain is found at 131–570; it reads GGMDSHIHFI…LPMAQRYFLF (440 aa). The Ni(2+) site is built by His136, His138, and Lys219. An N6-carboxylysine modification is found at Lys219. His221 serves as a coordination point for substrate. Positions 248 and 274 each coordinate Ni(2+). Residue His322 is the Proton donor of the active site. Asp362 contacts Ni(2+).

Belongs to the metallo-dependent hydrolases superfamily. Urease alpha subunit family. In terms of assembly, heterotrimer of UreA (gamma), UreB (beta) and UreC (alpha) subunits. Three heterotrimers associate to form the active enzyme. It depends on Ni cation as a cofactor. Post-translationally, carboxylation allows a single lysine to coordinate two nickel ions.

The protein resides in the cytoplasm. The catalysed reaction is urea + 2 H2O + H(+) = hydrogencarbonate + 2 NH4(+). It participates in nitrogen metabolism; urea degradation; CO(2) and NH(3) from urea (urease route): step 1/1. This is Urease subunit alpha from Allorhizobium ampelinum (strain ATCC BAA-846 / DSM 112012 / S4) (Agrobacterium vitis (strain S4)).